The chain runs to 467 residues: UPF0236 protein TTE0610/TTE0881/TTE1053/TTE2432 (467 aa).

The protein belongs to the UPF0236 family.

This chain is UPF0236 protein TTE0610/TTE0881/TTE1053/TTE2432, found in Caldanaerobacter subterraneus subsp. tengcongensis (strain DSM 15242 / JCM 11007 / NBRC 100824 / MB4) (Thermoanaerobacter tengcongensis).